The chain runs to 109 residues: Putative double-stranded DNA mimic protein KPK_2119 (109 aa).

The protein belongs to the putative dsDNA mimic protein family.

Functionally, may act as a double-stranded DNA (dsDNA) mimic. Probably regulates the activity of a dsDNA-binding protein. The chain is Putative double-stranded DNA mimic protein KPK_2119 from Klebsiella pneumoniae (strain 342).